The chain runs to 243 residues: Large ribosomal subunit protein uL30 (243 aa).

The interval 1 to 31 (MADKILTPESQLKKSKAQQKSAEQVAAERAA) is disordered. The span at 18–28 (QQKSAEQVAAE) shows a compositional bias: low complexity.

Belongs to the universal ribosomal protein uL30 family.

The sequence is that of Large ribosomal subunit protein uL30 (RPL7) from Eremothecium gossypii (strain ATCC 10895 / CBS 109.51 / FGSC 9923 / NRRL Y-1056) (Yeast).